A 135-amino-acid polypeptide reads, in one-letter code: Large ribosomal subunit protein eL32 (135 aa).

The protein belongs to the eukaryotic ribosomal protein eL32 family.

In Methanococcus vannielii, this protein is Large ribosomal subunit protein eL32 (rpl32e).